A 344-amino-acid chain; its full sequence is Uroporphyrinogen decarboxylase (344 aa).

Substrate contacts are provided by residues 25–29 (RQAGR), Asp75, Tyr152, Ser207, and His323.

It belongs to the uroporphyrinogen decarboxylase family. As to quaternary structure, homodimer.

The protein resides in the cytoplasm. The enzyme catalyses uroporphyrinogen III + 4 H(+) = coproporphyrinogen III + 4 CO2. Its pathway is porphyrin-containing compound metabolism; protoporphyrin-IX biosynthesis; coproporphyrinogen-III from 5-aminolevulinate: step 4/4. In terms of biological role, catalyzes the decarboxylation of four acetate groups of uroporphyrinogen-III to yield coproporphyrinogen-III. This Roseobacter denitrificans (strain ATCC 33942 / OCh 114) (Erythrobacter sp. (strain OCh 114)) protein is Uroporphyrinogen decarboxylase.